A 145-amino-acid chain; its full sequence is 3-dehydroquinate dehydratase (145 aa).

Tyrosine 24 acts as the Proton acceptor in catalysis. Positions 76, 82, and 89 each coordinate substrate. The active-site Proton donor is histidine 102. Residues leucine 103 to serine 104 and arginine 113 contribute to the substrate site.

The protein belongs to the type-II 3-dehydroquinase family. In terms of assembly, homododecamer.

It catalyses the reaction 3-dehydroquinate = 3-dehydroshikimate + H2O. It participates in metabolic intermediate biosynthesis; chorismate biosynthesis; chorismate from D-erythrose 4-phosphate and phosphoenolpyruvate: step 3/7. Its function is as follows. Catalyzes a trans-dehydration via an enolate intermediate. This is 3-dehydroquinate dehydratase from Nitrosomonas eutropha (strain DSM 101675 / C91 / Nm57).